A 561-amino-acid polypeptide reads, in one-letter code: Urocanate hydratase (561 aa).

NAD(+) is bound by residues 52–53 (GG), Gln130, 176–178 (GMG), Glu196, Arg201, 242–243 (NA), 263–267 (QTSAH), 273–274 (YL), and Tyr322. Cys410 is a catalytic residue. Position 492 (Gly492) interacts with NAD(+).

Belongs to the urocanase family. NAD(+) is required as a cofactor.

The protein resides in the cytoplasm. The enzyme catalyses 4-imidazolone-5-propanoate = trans-urocanate + H2O. It functions in the pathway amino-acid degradation; L-histidine degradation into L-glutamate; N-formimidoyl-L-glutamate from L-histidine: step 2/3. In terms of biological role, catalyzes the conversion of urocanate to 4-imidazolone-5-propionate. This is Urocanate hydratase from Salmonella gallinarum (strain 287/91 / NCTC 13346).